A 400-amino-acid polypeptide reads, in one-letter code: Formate-dependent phosphoribosylglycinamide formyltransferase (400 aa).

N(1)-(5-phospho-beta-D-ribosyl)glycinamide-binding positions include 22–23 (EL) and Glu-82. ATP contacts are provided by residues Arg-115, Lys-156, 161-166 (SSGKGQ), 196-199 (EGFI), and Glu-204. The ATP-grasp domain occupies 120–309 (RLAAETLGLP…EFALHARAIL (190 aa)). Positions 268 and 280 each coordinate Mg(2+). N(1)-(5-phospho-beta-D-ribosyl)glycinamide contacts are provided by residues Asp-287, Lys-361, and 368-369 (RR).

The protein belongs to the PurK/PurT family. Homodimer.

The enzyme catalyses N(1)-(5-phospho-beta-D-ribosyl)glycinamide + formate + ATP = N(2)-formyl-N(1)-(5-phospho-beta-D-ribosyl)glycinamide + ADP + phosphate + H(+). It participates in purine metabolism; IMP biosynthesis via de novo pathway; N(2)-formyl-N(1)-(5-phospho-D-ribosyl)glycinamide from N(1)-(5-phospho-D-ribosyl)glycinamide (formate route): step 1/1. Functionally, involved in the de novo purine biosynthesis. Catalyzes the transfer of formate to 5-phospho-ribosyl-glycinamide (GAR), producing 5-phospho-ribosyl-N-formylglycinamide (FGAR). Formate is provided by PurU via hydrolysis of 10-formyl-tetrahydrofolate. The protein is Formate-dependent phosphoribosylglycinamide formyltransferase of Xanthomonas axonopodis pv. citri (strain 306).